The primary structure comprises 486 residues: MKSLDDLDFDNRFARLGDAFSTEVLPDPIAEPRLVVASPAALALLDLPAEASDEPVFAELFGGHKLWSEAEPRAMVYSGHQFGSYNPRLGDGRGLLLGEVLNQAGEHWDLHLKGAGQTPYSRMGDGRAVLRSSIREFLASEALPALGIPSSRAACVIGSSTPVWREKKESAAMLLRLAPSHVRFGHFEYFYYTRQHDQLKQLAAFVLEHHFADCGAAERPYAAMFRQVVERNAELIARWQAYGFCHGVMNTDNMSILGITFDYGPYAFLDDFDANHICNHSDDSGRYSFSNQVPIAHWNLAALAQALTPLVEVDELRASLELFLPLYQAHYLDLMRRRLGLGVAVENDQALVQELLQRMQGSAVDYSLFFRRLGEDAPEQALARLRDDFVDREAFDRWGEAYRRRVEAEGGEQAARRQRMHAVNPLYVLRNYLAQQAIEAAEQGDYTEVRLLHRLLARPFEEQPGMERFTRRPPDWGRHLEISCSS.

ATP is bound by residues Gly90, Gly92, Arg93, Lys113, Asp125, Gly126, Arg176, and Arg183. Asp252 (proton acceptor) is an active-site residue. Mg(2+) contacts are provided by Asn253 and Asp262. Asp262 is a binding site for ATP.

Belongs to the SELO family. Mg(2+) serves as cofactor. Requires Mn(2+) as cofactor.

It carries out the reaction L-seryl-[protein] + ATP = 3-O-(5'-adenylyl)-L-seryl-[protein] + diphosphate. The catalysed reaction is L-threonyl-[protein] + ATP = 3-O-(5'-adenylyl)-L-threonyl-[protein] + diphosphate. The enzyme catalyses L-tyrosyl-[protein] + ATP = O-(5'-adenylyl)-L-tyrosyl-[protein] + diphosphate. It catalyses the reaction L-histidyl-[protein] + UTP = N(tele)-(5'-uridylyl)-L-histidyl-[protein] + diphosphate. It carries out the reaction L-seryl-[protein] + UTP = O-(5'-uridylyl)-L-seryl-[protein] + diphosphate. The catalysed reaction is L-tyrosyl-[protein] + UTP = O-(5'-uridylyl)-L-tyrosyl-[protein] + diphosphate. In terms of biological role, nucleotidyltransferase involved in the post-translational modification of proteins. It can catalyze the addition of adenosine monophosphate (AMP) or uridine monophosphate (UMP) to a protein, resulting in modifications known as AMPylation and UMPylation. The sequence is that of Protein nucleotidyltransferase YdiU from Pseudomonas paraeruginosa (strain DSM 24068 / PA7) (Pseudomonas aeruginosa (strain PA7)).